The following is a 721-amino-acid chain: Dipeptidyl-peptidase 7 (721 aa).

The signal sequence occupies residues 1 to 21 (MKKFKLLLLALMCVAFLPSKA). Active-site charge relay system residues include His-87, Asp-228, and Ser-656.

This sequence belongs to the peptidase S46 family.

Its function is as follows. Catalyzes the removal of dipeptides from the N-terminus of oligopeptides. Most potently cleaves the synthetic substrate Met-Leu-methylcoumaryl-7-amide (Met-Leu-MCA), followed by Leu-Arg-MCA, while this enzyme does not hydrolyze Gly-Arg-, Gly-Gly-, Lys-Lys-, or Gly-Pro-MCA. This chain is Dipeptidyl-peptidase 7 (dpp7), found in Phocaeicola vulgatus (strain ATCC 8482 / DSM 1447 / JCM 5826 / CCUG 4940 / NBRC 14291 / NCTC 11154) (Bacteroides vulgatus).